The chain runs to 419 residues: DNA ligase (419 aa).

Residues 1 to 120 are NTD; the sequence is MLNHFPGHCS…ARQKRGAHTN (120 aa). The interval 121–317 is AD domain; that stretch reads RGMIPPMLVK…NYHSAHLAKL (197 aa). The active-site N6-AMP-lysine intermediate is Lys151. ATP contacts are provided by Lys151, Glu203, and Phe232. Glu203 provides a ligand contact to a divalent metal cation. Position 291 (Glu291) interacts with a divalent metal cation. Residues Ile294 and Lys316 each contribute to the ATP site. An OB domain region spans residues 318–419; that stretch reads KPLLDAEFIL…REPINVLEII (102 aa).

The protein belongs to the ATP-dependent DNA ligase family.

The protein resides in the virion. The enzyme catalyses ATP + (deoxyribonucleotide)n-3'-hydroxyl + 5'-phospho-(deoxyribonucleotide)m = (deoxyribonucleotide)n+m + AMP + diphosphate.. Its function is as follows. Very low-fidelity DNA ligase that seals nicks in double-stranded DNA during DNA repair. Together with the viral repair DNA polymerase X, fills the single nucleotide gaps generated by the AP endonuclease. It is not essential for viral replication and recombination. Displays a very low adenylation activity towards DNA with 3'-dideoxy- or 3'-amino-terminated nicks compared to regular nick DNA. This African swine fever virus (isolate Tick/South Africa/Pretoriuskop Pr4/1996) (ASFV) protein is DNA ligase.